Reading from the N-terminus, the 209-residue chain is Probable phosphatase C1687.21 (209 aa).

The Tele-phosphohistidine intermediate role is filled by His-8. Glu-82 serves as the catalytic Proton donor/acceptor.

This sequence belongs to the phosphoglycerate mutase family. BPG-dependent PGAM subfamily.

It localises to the cytoplasm. The protein localises to the nucleus. This Schizosaccharomyces pombe (strain 972 / ATCC 24843) (Fission yeast) protein is Probable phosphatase C1687.21.